Consider the following 181-residue polypeptide: uncharacterized protein (181 aa).

One can recognise a Nudix hydrolase domain in the interval leucine 35 to serine 175. The Nudix box signature appears at glycine 72–glycine 94. The Mg(2+) site is built by glutamate 88 and glutamate 92.

Belongs to the Nudix hydrolase family. Mg(2+) serves as cofactor.

This is an uncharacterized protein from Streptomyces coelicolor (strain ATCC BAA-471 / A3(2) / M145).